The primary structure comprises 944 residues: UvrABC system protein A (944 aa).

Gly-33–Ser-40 is an ATP binding site. Residues Cys-252–Cys-279 form a C4-type zinc finger. 2 ABC transporter domains span residues Trp-309–Leu-587 and Ile-607–Lys-935. Gly-639–Ser-646 contributes to the ATP binding site. The segment at Cys-738–Cys-764 adopts a C4-type zinc-finger fold.

This sequence belongs to the ABC transporter superfamily. UvrA family. In terms of assembly, forms a heterotetramer with UvrB during the search for lesions.

Its subcellular location is the cytoplasm. The UvrABC repair system catalyzes the recognition and processing of DNA lesions. UvrA is an ATPase and a DNA-binding protein. A damage recognition complex composed of 2 UvrA and 2 UvrB subunits scans DNA for abnormalities. When the presence of a lesion has been verified by UvrB, the UvrA molecules dissociate. The polypeptide is UvrABC system protein A (Staphylococcus epidermidis (strain ATCC 12228 / FDA PCI 1200)).